The sequence spans 237 residues: Ribosomal RNA small subunit methyltransferase G (237 aa).

S-adenosyl-L-methionine contacts are provided by residues Gly-78, Phe-83, 129–130 (AE), and Arg-148. A disordered region spans residues 218-237 (KKETPNKFPRKAGMPNKRPL).

It belongs to the methyltransferase superfamily. RNA methyltransferase RsmG family.

The protein localises to the cytoplasm. Its function is as follows. Specifically methylates the N7 position of a guanine in 16S rRNA. The chain is Ribosomal RNA small subunit methyltransferase G from Streptococcus suis (strain 98HAH33).